An 83-amino-acid polypeptide reads, in one-letter code: uncharacterized protein (83 aa).

This is an uncharacterized protein from Synechocystis sp. (strain ATCC 27184 / PCC 6803 / Kazusa).